The chain runs to 317 residues: Transcription initiation factor IIB 3 (317 aa).

Residues 1-14 (MERATREREKEQRE) show a composition bias toward basic and acidic residues. The interval 1–25 (MERATREREKEQREQAQTNDEAQQC) is disordered. A TFIIB-type zinc finger spans residues 21-50 (EAQQCPECNSANVITDQSERVCEDCGLVLE). Positions 25, 28, 42, and 45 each coordinate Zn(2+). The segment at 62–83 (AFNSSERDQKSRVGAPTTKTMH) is disordered. Repeat copies occupy residues 136 to 219 (SEID…AQEL) and 230 to 311 (EYLP…EQIE).

The protein belongs to the TFIIB family.

Functionally, stabilizes TBP binding to an archaeal box-A promoter. Also responsible for recruiting RNA polymerase II to the pre-initiation complex (DNA-TBP-TFIIB). In Halobacterium salinarum (strain ATCC 700922 / JCM 11081 / NRC-1) (Halobacterium halobium), this protein is Transcription initiation factor IIB 3.